Here is a 538-residue protein sequence, read N- to C-terminus: Mevalonate kinase erg12 (538 aa).

Residues 1–87 are disordered; it reads MGNPRGRRTN…RNMSRKPSSP (87 aa). A compositionally biased stretch (polar residues) spans 9–29; that stretch reads TNGSIKTSKGTQRGTVSNLLS. Low complexity predominate over residues 57–69; sequence TTPSTTESTLKTT. ATP is bound by residues K99, S231, and 236–242; that span reads GAGLGSS. Residues S242 and E287 each coordinate Mg(2+). Residue D298 is the Proton acceptor of the active site.

This sequence belongs to the GHMP kinase family. Mevalonate kinase subfamily. Homodimer. Mg(2+) is required as a cofactor.

Its subcellular location is the cytoplasm. The protein resides in the cytosol. The catalysed reaction is (R)-mevalonate + ATP = (R)-5-phosphomevalonate + ADP + H(+). It participates in isoprenoid biosynthesis; isopentenyl diphosphate biosynthesis via mevalonate pathway; isopentenyl diphosphate from (R)-mevalonate: step 1/3. In terms of biological role, mevalonate kinase; part of the second module of ergosterol biosynthesis pathway that includes the middle steps of the pathway. Erg12 converts mevalonate into 5-phosphomevalonate. The second module is carried out in the vacuole and involves the formation of farnesyl diphosphate, which is also an important intermediate in the biosynthesis of ubiquinone, dolichol, heme and prenylated proteins. Activity by the mevalonate kinase erg12 (AFUA_4G07780) first converts mevalonate into 5-phosphomevalonate. 5-phosphomevalonate is then further converted to 5-diphosphomevalonate by the phosphomevalonate kinase erg8 (AFUA_5G10680). The diphosphomevalonate decarboxylase mvd1 (AFUA_4G07130) then produces isopentenyl diphosphate. The isopentenyl-diphosphate delta-isomerase idi1 (AFUA_6G11160) then catalyzes the 1,3-allylic rearrangement of the homoallylic substrate isopentenyl (IPP) to its highly electrophilic allylic isomer, dimethylallyl diphosphate (DMAPP). Finally the farnesyl diphosphate synthase erg20 (AFUA_5G02450) catalyzes the sequential condensation of isopentenyl pyrophosphate with dimethylallyl pyrophosphate, and then with the resultant geranylpyrophosphate to the ultimate product farnesyl pyrophosphate. The sequence is that of Mevalonate kinase erg12 from Aspergillus fumigatus (strain ATCC MYA-4609 / CBS 101355 / FGSC A1100 / Af293) (Neosartorya fumigata).